The chain runs to 74 residues: uncharacterized protein (74 aa).

Residues 29-63 adopt a coiled-coil conformation; it reads LNSKKSALQKDKELQQQAKAQESALAGEELRRRAL.

This is an uncharacterized protein from Pseudoalteromonas phage PM2 (Bacteriophage PM2).